Here is an 808-residue protein sequence, read N- to C-terminus: Phospholipase D alpha 1 (808 aa).

Residues 1–125 (MAQILLHGTL…LEGEEIDKWV (125 aa)) enclose the C2 domain. Asp-186 is a Ca(2+) binding site. Residues 326-364 (TMFTHHQKIVVVDSELPSGESEKRRILSFVGGIDLCDGR) enclose the PLD phosphodiesterase 1 domain. Catalysis depends on residues His-331, Lys-333, and Asp-338. His-331 contributes to the a 1,2-diacyl-sn-glycero-3-phosphate binding site. Ca(2+) contacts are provided by His-370 and His-404. Gln-520 and His-659 together coordinate a 1,2-diacyl-sn-glycero-3-phosphate. The PLD phosphodiesterase 2 domain maps to 654-681 (FMIYVHSKMMIVDDEYIIVGSANINQRS). Residues His-659, Lys-661, and Asp-666 contribute to the active site. Residue Glu-720 coordinates Ca(2+).

Belongs to the phospholipase D family. C2-PLD subfamily. Requires Ca(2+) as cofactor.

The catalysed reaction is a 1,2-diacyl-sn-glycero-3-phosphocholine + H2O = a 1,2-diacyl-sn-glycero-3-phosphate + choline + H(+). Hydrolyzes glycerol-phospholipids at the terminal phosphodiesteric bond. Plays an important role in various cellular processes. In Nicotiana tabacum (Common tobacco), this protein is Phospholipase D alpha 1 (PLD1).